A 445-amino-acid polypeptide reads, in one-letter code: Probable carboxypeptidase UREG_07869 (445 aa).

The signal sequence occupies residues 1–17 (MKSLILTTLALLPLVSC). Aspartate 165 contributes to the Zn(2+) binding site. Glutamate 197 functions as the Proton acceptor in the catalytic mechanism. Residue glutamate 198 participates in Zn(2+) binding.

This sequence belongs to the peptidase M20A family. The cofactor is Zn(2+).

Its subcellular location is the secreted. The sequence is that of Probable carboxypeptidase UREG_07869 from Uncinocarpus reesii (strain UAMH 1704).